The chain runs to 238 residues: tRNA (guanine-N(7)-)-methyltransferase (238 aa).

S-adenosyl-L-methionine is bound by residues Glu68, Glu93, Asp120, and Asp143. Residue Asp143 is part of the active site. Residues Lys147, Asp179, and 216–219 (TKFE) contribute to the substrate site.

It belongs to the class I-like SAM-binding methyltransferase superfamily. TrmB family.

It catalyses the reaction guanosine(46) in tRNA + S-adenosyl-L-methionine = N(7)-methylguanosine(46) in tRNA + S-adenosyl-L-homocysteine. The protein operates within tRNA modification; N(7)-methylguanine-tRNA biosynthesis. Its function is as follows. Catalyzes the formation of N(7)-methylguanine at position 46 (m7G46) in tRNA. This chain is tRNA (guanine-N(7)-)-methyltransferase, found in Aliivibrio fischeri (strain MJ11) (Vibrio fischeri).